A 222-amino-acid polypeptide reads, in one-letter code: Deoxyribose-phosphate aldolase (222 aa).

Asp89 serves as the catalytic Proton donor/acceptor. The Schiff-base intermediate with acetaldehyde role is filled by Lys152. The active-site Proton donor/acceptor is Lys181.

This sequence belongs to the DeoC/FbaB aldolase family. DeoC type 1 subfamily.

Its subcellular location is the cytoplasm. The enzyme catalyses 2-deoxy-D-ribose 5-phosphate = D-glyceraldehyde 3-phosphate + acetaldehyde. It functions in the pathway carbohydrate degradation; 2-deoxy-D-ribose 1-phosphate degradation; D-glyceraldehyde 3-phosphate and acetaldehyde from 2-deoxy-alpha-D-ribose 1-phosphate: step 2/2. In terms of biological role, catalyzes a reversible aldol reaction between acetaldehyde and D-glyceraldehyde 3-phosphate to generate 2-deoxy-D-ribose 5-phosphate. This chain is Deoxyribose-phosphate aldolase, found in Alkaliphilus oremlandii (strain OhILAs) (Clostridium oremlandii (strain OhILAs)).